The primary structure comprises 122 residues: Selenoprotein H (122 aa).

An N6-acetyllysine modification is found at Lys-20. A cross-link (cysteinyl-selenocysteine (Cys-Sec); redox-active) is located at residues Cys-41–Sec-44. Residue Sec-44 is a non-standard amino acid, selenocysteine.

This sequence belongs to the SelWTH family.

Its function is as follows. May be involved in a redox-related process. The sequence is that of Selenoprotein H from Macaca fascicularis (Crab-eating macaque).